Consider the following 73-residue polypeptide: Dipeptidyl peptidase 3 (73 aa).

Belongs to the peptidase M49 family. The cofactor is Zn(2+).

It is found in the membrane. It catalyses the reaction Release of an N-terminal dipeptide from a peptide comprising four or more residues, with broad specificity. Also acts on dipeptidyl 2-naphthylamides.. Its function is as follows. Degrades neuropeptide proctolin (RYLPT) by cleavage between Tyr and Leu residues. The polypeptide is Dipeptidyl peptidase 3 (Blaberus craniifer (Death's head cockroach)).